We begin with the raw amino-acid sequence, 208 residues long: GTP cyclohydrolase 1 (208 aa).

Residues cysteine 89, histidine 92, and cysteine 163 each coordinate Zn(2+).

This sequence belongs to the GTP cyclohydrolase I family. In terms of assembly, homomer.

It carries out the reaction GTP + H2O = 7,8-dihydroneopterin 3'-triphosphate + formate + H(+). Its pathway is cofactor biosynthesis; 7,8-dihydroneopterin triphosphate biosynthesis; 7,8-dihydroneopterin triphosphate from GTP: step 1/1. The protein is GTP cyclohydrolase 1 of Saccharolobus islandicus (strain Y.N.15.51 / Yellowstone #2) (Sulfolobus islandicus).